The primary structure comprises 180 residues: MVRESIPKEGENIKIQSYKHDGKIHRVWSETTILKGTDHVVIGGNDHTLVTESDGRTWITREPAIVYFHSEYWFNVICMFREDGIYYYCNLSSPFVCDEEALKYIDYDLDIKVYPNGKYHLLDEDEYEQHMNQMNYPHDIDIILRRNVDILQQWIEQKKGPFAPDFIKVWKERYKKIRQY.

Residue Arg-26 is the Proton donor of the active site. Residues Asn-90, Asp-106, Asp-108, Asp-110, Asp-123, and Glu-126 each contribute to the Mg(2+) site.

Belongs to the Ntdp family. The cofactor is Mg(2+).

It catalyses the reaction a ribonucleoside 5'-triphosphate + H2O = a ribonucleoside 5'-diphosphate + phosphate + H(+). The enzyme catalyses a ribonucleoside 5'-diphosphate + H2O = a ribonucleoside 5'-phosphate + phosphate + H(+). Functionally, has nucleoside phosphatase activity towards nucleoside triphosphates and nucleoside diphosphates. The protein is Nucleoside triphosphate/diphosphate phosphatase of Staphylococcus aureus (strain Mu3 / ATCC 700698).